Reading from the N-terminus, the 93-residue chain is Alpha-defensin 1 (93 aa).

Residues 1-19 (MKKLVLLFALVLLGFQVQA) form the signal peptide. Positions 20–58 (DSIQNTDEETKTEEQPGEEDQAVSVSFGDPEGTSLQEES) are excised as a propeptide. The interval 24–54 (NTDEETKTEEQPGEEDQAVSVSFGDPEGTSL) is disordered. Disulfide bonds link cysteine 64–cysteine 92, cysteine 66–cysteine 81, and cysteine 71–cysteine 91.

This sequence belongs to the alpha-defensin family. In terms of tissue distribution, paneth cells of the small bowel.

Its subcellular location is the secreted. In terms of biological role, probably contributes to the antimicrobial barrier function of the small bowel mucosa. Has antibacterial activity against attenuated mutants of S.typhimurium. The chain is Alpha-defensin 1 (Defa1) from Mus musculus (Mouse).